The following is an 83-amino-acid chain: U5-theraphotoxin-Hs1c (83 aa).

The signal sequence occupies residues 1-21 (MKTSMFLTLTGLVLLFVVCYA). Residues 22-49 (SESEEKEFPKELLSSIFAADSDFKVEER) constitute a propeptide that is removed on maturation. 3 disulfide bridges follow: C51-C63, C56-C68, and C62-C75.

This sequence belongs to the neurotoxin 10 (Hwtx-1) family. 51 (Hntx-8) subfamily. Hntx-8 sub-subfamily. As to expression, expressed by the venom gland.

The protein resides in the secreted. Functionally, agglutinates erythrocytes. In Cyriopagopus schmidti (Chinese bird spider), this protein is U5-theraphotoxin-Hs1c.